The sequence spans 122 residues: Large ribosomal subunit protein uL14 (122 aa).

Belongs to the universal ribosomal protein uL14 family. Part of the 50S ribosomal subunit. Forms a cluster with proteins L3 and L19. In the 70S ribosome, L14 and L19 interact and together make contacts with the 16S rRNA in bridges B5 and B8.

In terms of biological role, binds to 23S rRNA. Forms part of two intersubunit bridges in the 70S ribosome. In Listeria monocytogenes serotype 4b (strain CLIP80459), this protein is Large ribosomal subunit protein uL14.